A 253-amino-acid polypeptide reads, in one-letter code: uncharacterized protein (253 aa).

This is an uncharacterized protein from Acanthamoeba polyphaga mimivirus (APMV).